A 147-amino-acid polypeptide reads, in one-letter code: Large ribosomal subunit protein bL9 (147 aa).

The protein belongs to the bacterial ribosomal protein bL9 family.

Its function is as follows. Binds to the 23S rRNA. The sequence is that of Large ribosomal subunit protein bL9 from Geotalea uraniireducens (strain Rf4) (Geobacter uraniireducens).